The primary structure comprises 73 residues: uncharacterized protein (73 aa).

Helical transmembrane passes span 7 to 27 (LFSS…IPNL) and 47 to 67 (YFGY…IIIL).

It localises to the cell membrane. This is an uncharacterized protein from Methanocaldococcus jannaschii (strain ATCC 43067 / DSM 2661 / JAL-1 / JCM 10045 / NBRC 100440) (Methanococcus jannaschii).